The following is a 443-amino-acid chain: Trigger factor (443 aa).

In terms of domain architecture, PPIase FKBP-type spans 169 to 254 (GDIAFLDFSG…LNSIKEVQLP (86 aa)).

This sequence belongs to the FKBP-type PPIase family. Tig subfamily.

It localises to the cytoplasm. It carries out the reaction [protein]-peptidylproline (omega=180) = [protein]-peptidylproline (omega=0). Its function is as follows. Involved in protein export. Acts as a chaperone by maintaining the newly synthesized protein in an open conformation. Functions as a peptidyl-prolyl cis-trans isomerase. The protein is Trigger factor of Mycoplasmoides gallisepticum (strain R(low / passage 15 / clone 2)) (Mycoplasma gallisepticum).